We begin with the raw amino-acid sequence, 61 residues long: Small ribosomal subunit protein uS14 (61 aa).

Zn(2+) contacts are provided by C24, C27, C40, and C43.

Belongs to the universal ribosomal protein uS14 family. Zinc-binding uS14 subfamily. In terms of assembly, part of the 30S ribosomal subunit. Contacts proteins S3 and S10. Requires Zn(2+) as cofactor.

Its function is as follows. Binds 16S rRNA, required for the assembly of 30S particles and may also be responsible for determining the conformation of the 16S rRNA at the A site. In Halothermothrix orenii (strain H 168 / OCM 544 / DSM 9562), this protein is Small ribosomal subunit protein uS14.